A 118-amino-acid polypeptide reads, in one-letter code: Ribonuclease P protein component 2 (118 aa).

This sequence belongs to the eukaryotic/archaeal RNase P protein component 2 family. As to quaternary structure, consists of a catalytic RNA component and at least 4-5 protein subunits.

It localises to the cytoplasm. The enzyme catalyses Endonucleolytic cleavage of RNA, removing 5'-extranucleotides from tRNA precursor.. Part of ribonuclease P, a protein complex that generates mature tRNA molecules by cleaving their 5'-ends. In Pyrococcus abyssi (strain GE5 / Orsay), this protein is Ribonuclease P protein component 2.